The following is a 313-amino-acid chain: T-box protein 37 (313 aa).

The segment at residues 19–195 (IWEKFYPKTE…HNKFASGFRS (177 aa)) is a DNA-binding region (T-box). Positions 193–228 (FRSNGKRRLSSESENSENSPPKRSASAISSLTPPAI) are disordered.

The protein resides in the nucleus. Its function is as follows. Transcription factor. Required for mesodermal induction, acting redundantly with transcription factor tbx-38. Together with tbx-38, acts by inducing cell fates in the AB lineage, thereby playing a role in development of the anterior pharynx. In Caenorhabditis elegans, this protein is T-box protein 37 (tbx-37).